The sequence spans 702 residues: Pseudouridylate synthase PUS7L (702 aa).

Ser-79 is modified (phosphoserine). Residues 84 to 116 (NSEGAADLPGCSDGDRSHQSDSEKENSVNSVTS) form a disordered region. A compositionally biased stretch (basic and acidic residues) spans 96 to 109 (DGDRSHQSDSEKEN). The active-site Nucleophile is the Asp-339. The 223-residue stretch at 424–646 (GFVNYYGPQR…PGCYRHIVKH (223 aa)) folds into the TRUD domain.

Belongs to the pseudouridine synthase TruD family.

It catalyses the reaction a uridine in mRNA = a pseudouridine in mRNA. Pseudouridine synthase that catalyzes pseudouridylation of mRNAs. In Mus musculus (Mouse), this protein is Pseudouridylate synthase PUS7L.